We begin with the raw amino-acid sequence, 551 residues long: Arginine--tRNA ligase (551 aa).

Residues 123–133 (ANPTGPLTIGR) carry the 'HIGH' region motif.

It belongs to the class-I aminoacyl-tRNA synthetase family. In terms of assembly, monomer.

Its subcellular location is the cytoplasm. It carries out the reaction tRNA(Arg) + L-arginine + ATP = L-arginyl-tRNA(Arg) + AMP + diphosphate. In Chlorobaculum parvum (strain DSM 263 / NCIMB 8327) (Chlorobium vibrioforme subsp. thiosulfatophilum), this protein is Arginine--tRNA ligase.